Consider the following 391-residue polypeptide: uncharacterized protein (391 aa).

Positions 1–20 (MRKLFLLSILMIGVIVAFAG) are cleaved as a signal peptide. Cys21 is lipidated: S-archaeol cysteine. Positions 104-377 (RIVTDFYCPI…DFAKMIHPEL (274 aa)) constitute a Fe/B12 periplasmic-binding domain.

It localises to the cell membrane. This is an uncharacterized protein from Methanocaldococcus jannaschii (strain ATCC 43067 / DSM 2661 / JAL-1 / JCM 10045 / NBRC 100440) (Methanococcus jannaschii).